Consider the following 320-residue polypeptide: Homoserine kinase (320 aa).

Position 100–110 (100–110 (PLSSGMGSSAA)) interacts with ATP.

Belongs to the GHMP kinase family. Homoserine kinase subfamily.

The protein localises to the cytoplasm. The catalysed reaction is L-homoserine + ATP = O-phospho-L-homoserine + ADP + H(+). It functions in the pathway amino-acid biosynthesis; L-threonine biosynthesis; L-threonine from L-aspartate: step 4/5. Catalyzes the ATP-dependent phosphorylation of L-homoserine to L-homoserine phosphate. In Chlorobium phaeobacteroides (strain DSM 266 / SMG 266 / 2430), this protein is Homoserine kinase.